The chain runs to 60 residues: Large ribosomal subunit protein uL30 (60 aa).

It belongs to the universal ribosomal protein uL30 family. Part of the 50S ribosomal subunit.

In Cupriavidus metallidurans (strain ATCC 43123 / DSM 2839 / NBRC 102507 / CH34) (Ralstonia metallidurans), this protein is Large ribosomal subunit protein uL30.